Consider the following 115-residue polypeptide: NADH-ubiquinone oxidoreductase chain 3 (115 aa).

Helical transmembrane passes span 5 to 25, 55 to 75, and 86 to 106; these read TALLVNITLSMLLIIVAFWFF, FFLVAITFLLFDLEIALLLPL, and IMMLTAFILISVLALGLAYEW.

The protein belongs to the complex I subunit 3 family. As to quaternary structure, core subunit of respiratory chain NADH dehydrogenase (Complex I) which is composed of 45 different subunits. Interacts with TMEM186. Interacts with TMEM242.

Its subcellular location is the mitochondrion inner membrane. It catalyses the reaction a ubiquinone + NADH + 5 H(+)(in) = a ubiquinol + NAD(+) + 4 H(+)(out). In terms of biological role, core subunit of the mitochondrial membrane respiratory chain NADH dehydrogenase (Complex I) which catalyzes electron transfer from NADH through the respiratory chain, using ubiquinone as an electron acceptor. Essential for the catalytic activity of complex I. In Peromyscus sejugis (Santa Cruz mouse), this protein is NADH-ubiquinone oxidoreductase chain 3.